Here is a 154-residue protein sequence, read N- to C-terminus: Putative lipoprotein MAB_4074c (154 aa).

An N-terminal signal peptide occupies residues 1 to 21 (MMNRVIVGAMGLLAAGAVVVG). The N-palmitoyl cysteine moiety is linked to residue Cys22. The S-diacylglycerol cysteine moiety is linked to residue Cys22.

It belongs to the mycobacterial 19 kDa antigen family.

The protein resides in the cell membrane. The sequence is that of Putative lipoprotein MAB_4074c from Mycobacteroides abscessus (strain ATCC 19977 / DSM 44196 / CCUG 20993 / CIP 104536 / JCM 13569 / NCTC 13031 / TMC 1543 / L948) (Mycobacterium abscessus).